A 356-amino-acid chain; its full sequence is Phosphoserine aminotransferase (356 aa).

Arginine 41 lines the L-glutamate pocket. Pyridoxal 5'-phosphate contacts are provided by residues 75 to 76 (AS), tryptophan 99, threonine 147, aspartate 166, and glutamine 189. Lysine 190 bears the N6-(pyridoxal phosphate)lysine mark. Position 231-232 (231-232 (NT)) interacts with pyridoxal 5'-phosphate.

This sequence belongs to the class-V pyridoxal-phosphate-dependent aminotransferase family. SerC subfamily. In terms of assembly, homodimer. Pyridoxal 5'-phosphate serves as cofactor.

The protein localises to the cytoplasm. The enzyme catalyses O-phospho-L-serine + 2-oxoglutarate = 3-phosphooxypyruvate + L-glutamate. It carries out the reaction 4-(phosphooxy)-L-threonine + 2-oxoglutarate = (R)-3-hydroxy-2-oxo-4-phosphooxybutanoate + L-glutamate. It participates in amino-acid biosynthesis; L-serine biosynthesis; L-serine from 3-phospho-D-glycerate: step 2/3. Its pathway is cofactor biosynthesis; pyridoxine 5'-phosphate biosynthesis; pyridoxine 5'-phosphate from D-erythrose 4-phosphate: step 3/5. Catalyzes the reversible conversion of 3-phosphohydroxypyruvate to phosphoserine and of 3-hydroxy-2-oxo-4-phosphonooxybutanoate to phosphohydroxythreonine. The polypeptide is Phosphoserine aminotransferase (Phocaeicola vulgatus (strain ATCC 8482 / DSM 1447 / JCM 5826 / CCUG 4940 / NBRC 14291 / NCTC 11154) (Bacteroides vulgatus)).